The sequence spans 244 residues: MHFPVFIMQNHQRRALVLFSGGQDSTTCLAWALDRYAHVETVAFDYGQRHRIELDARLNVLREIRGRFPAWAARLGQDHLLDLKVLGQVGDTAMTSDRAIEMQANGLPNTFVPGRNLLFLTLAAALGYRRQLDVLVGGMCETDFSGYPDCRDDTMKAQQVALSLGLGSRVTIETPLMWLDKADTWALADSLGGESLVQTIVEESHTCYVGERGQRHDWGYGCGECPACVLRKAGWSRWAERAPR.

Residue 19 to 29 (FSGGQDSTTCL) participates in ATP binding. Residues cysteine 207, cysteine 222, cysteine 225, and cysteine 228 each contribute to the Zn(2+) site.

It belongs to the QueC family. Zn(2+) is required as a cofactor.

It catalyses the reaction 7-carboxy-7-deazaguanine + NH4(+) + ATP = 7-cyano-7-deazaguanine + ADP + phosphate + H2O + H(+). The protein operates within purine metabolism; 7-cyano-7-deazaguanine biosynthesis. Catalyzes the ATP-dependent conversion of 7-carboxy-7-deazaguanine (CDG) to 7-cyano-7-deazaguanine (preQ(0)). The chain is 7-cyano-7-deazaguanine synthase from Bordetella avium (strain 197N).